A 699-amino-acid chain; its full sequence is Putative inactive kinesin-like protein KIN-7B (699 aa).

The region spanning methionine 1–valine 170 is the Kinesin motor domain. Residues valine 179–serine 247 adopt a coiled-coil conformation. Residues glycine 249–glycine 345 are disordered. Over residues arginine 264–valine 275 the composition is skewed to low complexity. Basic and acidic residues predominate over residues serine 276–glutamate 298. Residues glycine 313–serine 338 are compositionally biased toward polar residues.

This sequence belongs to the TRAFAC class myosin-kinesin ATPase superfamily. Kinesin family. KIN-7 subfamily.

The protein is Putative inactive kinesin-like protein KIN-7B of Oryza sativa subsp. japonica (Rice).